A 271-amino-acid polypeptide reads, in one-letter code: MPELPEVETTLRGLSPHLVGQRIHGVILRRPDLRWPIPEQIERLLPGATITNVRRRAKYLLIDTDAGGSALLHLGMSGSLRVLPGDTLPRAHDHVDISLQNGRVLRFNDPRRFGCLLWQSGTQTHELLAALGPEPLSDAFTGDYLHALAQGRRAAVKTFLMDQAVVVGVGNIYAAESLHRAGISPLREAGKVSLARYRRLADAVKDILAYAIQRGGTTLRDFISPDGAPGYFEQELSVYGREGEACKQCGRVLKHATIGQRATVWCGSCQR.

P2 (schiff-base intermediate with DNA) is an active-site residue. E3 acts as the Proton donor in catalysis. K58 serves as the catalytic Proton donor; for beta-elimination activity. 3 residues coordinate DNA: H92, R111, and R152. An FPG-type zinc finger spans residues 237–271 (SVYGREGEACKQCGRVLKHATIGQRATVWCGSCQR). The Proton donor; for delta-elimination activity role is filled by R261.

This sequence belongs to the FPG family. In terms of assembly, monomer. Zn(2+) serves as cofactor.

It carries out the reaction Hydrolysis of DNA containing ring-opened 7-methylguanine residues, releasing 2,6-diamino-4-hydroxy-5-(N-methyl)formamidopyrimidine.. The catalysed reaction is 2'-deoxyribonucleotide-(2'-deoxyribose 5'-phosphate)-2'-deoxyribonucleotide-DNA = a 3'-end 2'-deoxyribonucleotide-(2,3-dehydro-2,3-deoxyribose 5'-phosphate)-DNA + a 5'-end 5'-phospho-2'-deoxyribonucleoside-DNA + H(+). Involved in base excision repair of DNA damaged by oxidation or by mutagenic agents. Acts as a DNA glycosylase that recognizes and removes damaged bases. Has a preference for oxidized purines, such as 7,8-dihydro-8-oxoguanine (8-oxoG). Has AP (apurinic/apyrimidinic) lyase activity and introduces nicks in the DNA strand. Cleaves the DNA backbone by beta-delta elimination to generate a single-strand break at the site of the removed base with both 3'- and 5'-phosphates. This is Formamidopyrimidine-DNA glycosylase from Xanthomonas euvesicatoria pv. vesicatoria (strain 85-10) (Xanthomonas campestris pv. vesicatoria).